A 621-amino-acid chain; its full sequence is Chaperone protein HtpG (621 aa).

The interval 1 to 328 is a; substrate-binding; sequence MIQEKKKFDA…SEDLPLNISR (328 aa). The tract at residues 329–544 is b; the sequence is ESLQHNSVLE…DAAMDIRMER (216 aa). The tract at residues 475-494 is disordered; that stretch reads SDIDVEQTTSQSEAKNTDSK. Residues 545 to 621 form a c region; sequence FLIEQKQIAN…LNDIVQKAIL (77 aa).

It belongs to the heat shock protein 90 family. Homodimer.

The protein localises to the cytoplasm. In terms of biological role, molecular chaperone. Has ATPase activity. This chain is Chaperone protein HtpG, found in Rickettsia rickettsii (strain Iowa).